The sequence spans 109 residues: Nucleoid-associated protein YbaB (109 aa).

The protein belongs to the YbaB/EbfC family. Homodimer.

The protein localises to the cytoplasm. The protein resides in the nucleoid. Binds to DNA and alters its conformation. May be involved in regulation of gene expression, nucleoid organization and DNA protection. The sequence is that of Nucleoid-associated protein YbaB from Escherichia coli O127:H6 (strain E2348/69 / EPEC).